The following is a 352-amino-acid chain: Photosystem II D2 protein (352 aa).

Thr-2 carries the post-translational modification N-acetylthreonine. The residue at position 2 (Thr-2) is a Phosphothreonine. The helical transmembrane segment at 40–60 (CAYFAVGGWLTGTTFVTSWYT) threads the bilayer. Chlorophyll a is bound at residue His-117. The helical transmembrane segment at 124 to 140 (GFMLRQFEIARAIGLRP) threads the bilayer. Pheophytin a is bound by residues Gln-129 and Asn-142. A helical membrane pass occupies residues 152-165 (VFVSVFLIYPLGQS). His-197 is a binding site for chlorophyll a. Residues 207–227 (AALLCAIHGATVENTLFEDGD) traverse the membrane as a helical segment. A plastoquinone-binding residues include His-214 and Phe-261. His-214 is a Fe cation binding site. Residue His-268 coordinates Fe cation. The helical transmembrane segment at 278–294 (GLWMSAIGVVGLALNLR) threads the bilayer.

Belongs to the reaction center PufL/M/PsbA/D family. PSII is composed of 1 copy each of membrane proteins PsbA, PsbB, PsbC, PsbD, PsbE, PsbF, PsbH, PsbI, PsbJ, PsbK, PsbL, PsbM, PsbT, PsbX, PsbY, PsbZ, Psb30/Ycf12, at least 3 peripheral proteins of the oxygen-evolving complex and a large number of cofactors. It forms dimeric complexes. The D1/D2 heterodimer binds P680, chlorophylls that are the primary electron donor of PSII, and subsequent electron acceptors. It shares a non-heme iron and each subunit binds pheophytin, quinone, additional chlorophylls, carotenoids and lipids. There is also a Cl(-1) ion associated with D1 and D2, which is required for oxygen evolution. The PSII complex binds additional chlorophylls, carotenoids and specific lipids. is required as a cofactor.

The protein localises to the plastid. It is found in the chloroplast thylakoid membrane. The enzyme catalyses 2 a plastoquinone + 4 hnu + 2 H2O = 2 a plastoquinol + O2. Its function is as follows. Photosystem II (PSII) is a light-driven water:plastoquinone oxidoreductase that uses light energy to abstract electrons from H(2)O, generating O(2) and a proton gradient subsequently used for ATP formation. It consists of a core antenna complex that captures photons, and an electron transfer chain that converts photonic excitation into a charge separation. The D1/D2 (PsbA/PsbD) reaction center heterodimer binds P680, the primary electron donor of PSII as well as several subsequent electron acceptors. D2 is needed for assembly of a stable PSII complex. The sequence is that of Photosystem II D2 protein from Nephroselmis olivacea (Green alga).